The primary structure comprises 445 residues: Xylose isomerase (445 aa).

Catalysis depends on residues His-107 and Asp-110. Residues Glu-238, Glu-274, His-277, Asp-302, Asp-313, Asp-315, and Asp-345 each coordinate Mg(2+).

It belongs to the xylose isomerase family. In terms of assembly, homotetramer. Requires Mg(2+) as cofactor.

It is found in the cytoplasm. The enzyme catalyses alpha-D-xylose = alpha-D-xylulofuranose. This Bacillus cereus (strain ATCC 10987 / NRS 248) protein is Xylose isomerase.